The following is a 125-amino-acid chain: Mating factor alpha (125 aa).

The N-terminal stretch at 1 to 22 (MKLFTTLSASLIFIHSLGSTRA) is a signal peptide. Residues Asn57 and Asn67 are each glycosylated (N-linked (GlcNAc...) asparagine).

This chain is Mating factor alpha, found in Lachancea kluyveri (Yeast).